The chain runs to 330 residues: Methionyl-tRNA formyltransferase (330 aa).

116-119 contributes to the (6S)-5,6,7,8-tetrahydrofolate binding site; it reads SLLP.

Belongs to the Fmt family.

It carries out the reaction L-methionyl-tRNA(fMet) + (6R)-10-formyltetrahydrofolate = N-formyl-L-methionyl-tRNA(fMet) + (6S)-5,6,7,8-tetrahydrofolate + H(+). In terms of biological role, attaches a formyl group to the free amino group of methionyl-tRNA(fMet). The formyl group appears to play a dual role in the initiator identity of N-formylmethionyl-tRNA by promoting its recognition by IF2 and preventing the misappropriation of this tRNA by the elongation apparatus. The chain is Methionyl-tRNA formyltransferase from Nitratidesulfovibrio vulgaris (strain ATCC 29579 / DSM 644 / CCUG 34227 / NCIMB 8303 / VKM B-1760 / Hildenborough) (Desulfovibrio vulgaris).